We begin with the raw amino-acid sequence, 417 residues long: Sterile alpha motif domain-containing protein 14 (417 aa).

Residues 36-302 (QLLAKGRRHR…GGPRQETKCS (267 aa)) are disordered. The segment covering 40 to 49 (KGRRHRPSRS) has biased composition (basic residues). Phosphoserine occurs at positions 84 and 108. The segment covering 138–153 (SGSPPRSAPSSDSSPS) has biased composition (low complexity). The segment covering 159-173 (PRAEPHSEDDSRDAS) has biased composition (basic and acidic residues). 2 positions are modified to phosphoserine: Ser173 and Ser179. Composition is skewed to low complexity over residues 244–260 (SGKGSASSGSTTSPTCS) and 276–289 (STLSDDSTPPSSSP). Ser279 carries the post-translational modification Phosphoserine. Thr283 bears the Phosphothreonine mark. An SAM domain is found at 326–389 (WTSQQVGQWL…KRKLKELAAA (64 aa)). Residues 375–416 (DRALVKRKLKELAAAAEKERKAQEKTAKQREKLRRRENDAKK) adopt a coiled-coil conformation. The disordered stretch occupies residues 390 to 417 (AEKERKAQEKTAKQREKLRRRENDAKKS).

This Mus musculus (Mouse) protein is Sterile alpha motif domain-containing protein 14 (Samd14).